The primary structure comprises 20 residues: Punein (20 aa).

Positions 1 to 20 constitute a Barwin domain; sequence YHYYNPEENHFCATWDASKP.

Post-translationally, the N-terminus is blocked.

The sequence is that of Punein from Punica granatum (Pomegranate).